Here is a 339-residue protein sequence, read N- to C-terminus: Ketol-acid reductoisomerase (NADP(+)) (339 aa).

One can recognise a KARI N-terminal Rossmann domain in the interval methionine 1 to threonine 182. NADP(+) is bound by residues tyrosine 24–glutamine 27, arginine 48, serine 51, threonine 53, and aspartate 83–glutamine 86. Residue histidine 108 is part of the active site. Residue glycine 134 participates in NADP(+) binding. In terms of domain architecture, KARI C-terminal knotted spans serine 183–isoleucine 328. Aspartate 191, glutamate 195, glutamate 227, and glutamate 231 together coordinate Mg(2+). Serine 252 is a substrate binding site.

The protein belongs to the ketol-acid reductoisomerase family. Mg(2+) is required as a cofactor.

It catalyses the reaction (2R)-2,3-dihydroxy-3-methylbutanoate + NADP(+) = (2S)-2-acetolactate + NADPH + H(+). It carries out the reaction (2R,3R)-2,3-dihydroxy-3-methylpentanoate + NADP(+) = (S)-2-ethyl-2-hydroxy-3-oxobutanoate + NADPH + H(+). It functions in the pathway amino-acid biosynthesis; L-isoleucine biosynthesis; L-isoleucine from 2-oxobutanoate: step 2/4. It participates in amino-acid biosynthesis; L-valine biosynthesis; L-valine from pyruvate: step 2/4. Its function is as follows. Involved in the biosynthesis of branched-chain amino acids (BCAA). Catalyzes an alkyl-migration followed by a ketol-acid reduction of (S)-2-acetolactate (S2AL) to yield (R)-2,3-dihydroxy-isovalerate. In the isomerase reaction, S2AL is rearranged via a Mg-dependent methyl migration to produce 3-hydroxy-3-methyl-2-ketobutyrate (HMKB). In the reductase reaction, this 2-ketoacid undergoes a metal-dependent reduction by NADPH to yield (R)-2,3-dihydroxy-isovalerate. The sequence is that of Ketol-acid reductoisomerase (NADP(+)) from Paramagnetospirillum magneticum (strain ATCC 700264 / AMB-1) (Magnetospirillum magneticum).